The sequence spans 30 residues: rRNA N-glycosylase (30 aa).

The protein belongs to the ribosome-inactivating protein family. Type 1 RIP subfamily. In terms of tissue distribution, expressed in seeds.

It catalyses the reaction Endohydrolysis of the N-glycosidic bond at one specific adenosine on the 28S rRNA.. Functionally, exhibits N-glycosylase activity. Catalyzes the release of one adenine from a ribosome. Acts as a ribosome-inactivating protein and inhibits protein synthesis in a rabbit-reticulocyte lysate system and in various cell lines (in vitro). The sequence is that of rRNA N-glycosylase from Saponaria ocymoides (Rock soapwort).